The primary structure comprises 712 residues: Nucleolin (712 aa).

The disordered stretch occupies residues 1–305; that stretch reads MVKLAKAGKN…KKQKVEGTEP (305 aa). Residues K9, K15, and K16 each carry the N6-acetyllysine modification. Positions 24–43 are enriched in acidic residues; that stretch reads VEEDSEDEEMSEDEEDDSSG. S28, S34, S41, and S42 each carry phosphoserine. Over residues 56 to 107 the composition is skewed to low complexity; sequence AAATSAKKVVVSPTKKVAVATPAKKAAVTPGKKAAATPAKKTVTPAKAVTTP. The stretch at 58–65 is repeat 1; the sequence is ATSAKKVV. Positions 58 to 135 are 8 X 8 AA tandem repeats of X-T-P-X-K-K-X-X; the sequence is ATSAKKVVVS…GAAIPAKGAK (78 aa). S67 carries the phosphoserine modification. Residues T69, T76, T84, and T92 each carry the phosphothreonine modification. A run of 3 repeats spans residues 75–82, 83–90, and 91–98. Position 96 is an N6-acetyllysine (K96). At T99 the chain carries Phosphothreonine. One copy of the 5; truncated repeat lies at 99–104; the sequence is TPAKAV. At K102 the chain carries N6-acetyllysine. Copy 6 of the repeat occupies 105-112; sequence TTPGKKGA. T106 bears the Phosphothreonine mark. K109 bears the N6-acetyllysine mark. T113 bears the Phosphothreonine mark. The residue at position 116 (K116) is an N6-acetyllysine. Tandem repeats lie at residues 120-127 and 128-135. T121 is subject to Phosphothreonine. The segment covering 122–137 has biased composition (low complexity); sequence PGKKGAAIPAKGAKNG. At K124 the chain carries N6-acetyllysine. Phosphoserine is present on residues S145 and S153. Positions 145–171 are enriched in acidic residues; the sequence is SDEEEEDDSEEDEDDDEDEDEDEDEIE. Residues 172–183 are compositionally biased toward low complexity; it reads PAAMKAAAAAPA. Phosphoserine is present on residues S184 and S206. The segment covering 184-211 has biased composition (acidic residues); the sequence is SEDEDDEDDEDDEDEDDDEEDDSEEEAM. Position 214 is a phosphothreonine (T214). Positions 234 to 274 are enriched in acidic residues; the sequence is EDEDEEEDDEDEDDDDDDDDDDEDDEDEDDEEEEEEEEEEP. A compositionally biased stretch (basic and acidic residues) spans 275–302; sequence VKEAPGKRKKEMAKQKAAPEAKKQKVEG. K299 is covalently cross-linked (Glycyl lysine isopeptide (Lys-Gly) (interchain with G-Cter in SUMO1); alternate). K299 is covalently cross-linked (Glycyl lysine isopeptide (Lys-Gly) (interchain with G-Cter in SUMO2); alternate). The residue at position 303 (T303) is a Phosphothreonine. RRM domains follow at residues 309–385 and 395–468; these read FNLF…KPKG and RTLL…YTGE. N6-acetyllysine is present on K320. Residue K326 forms a Glycyl lysine isopeptide (Lys-Gly) (interchain with G-Cter in SUMO1); alternate linkage. K326 is covalently cross-linked (Glycyl lysine isopeptide (Lys-Gly) (interchain with G-Cter in SUMO2); alternate). K350 is subject to N6-acetyllysine. S358 bears the Phosphoserine mark. Residue T369 is modified to Phosphothreonine. K372 is covalently cross-linked (Glycyl lysine isopeptide (Lys-Gly) (interchain with G-Cter in SUMO2)). Residue K379 forms a Glycyl lysine isopeptide (Lys-Gly) (interchain with G-Cter in SUMO2); alternate linkage. Residue K379 is modified to N6-acetyllysine; alternate. Residues K400 and K405 each carry the N6-acetyllysine modification. T407 is modified (phosphothreonine). Residues K429 and K446 each carry the N6-acetyllysine modification. A phosphoserine mark is found at S460 and S462. N6-acetyllysine occurs at positions 469 and 479. Residues 488–562 enclose the RRM 3 domain; that stretch reads KTLVLSNLSY…RAIRLELQGP (75 aa). A Glycyl lysine isopeptide (Lys-Gly) (interchain with G-Cter in SUMO2); alternate cross-link involves residue K515. At K515 the chain carries N6-acetyllysine; alternate. K523 carries the N6-acetyllysine modification. S565 is subject to Phosphoserine. K574 is subject to N6-acetyllysine. The region spanning 574-649 is the RRM 4 domain; it reads KTLFVKGLSE…NKVTLDWAKP (76 aa). Residue K579 forms a Glycyl lysine isopeptide (Lys-Gly) (interchain with G-Cter in SUMO2); alternate linkage. Position 579 is an N6-acetyllysine; alternate (K579). The residue at position 582 (S582) is a Phosphoserine. K591 is covalently cross-linked (Glycyl lysine isopeptide (Lys-Gly) (interchain with G-Cter in SUMO1); alternate). K591 is covalently cross-linked (Glycyl lysine isopeptide (Lys-Gly) (interchain with G-Cter in SUMO2); alternate). Phosphoserine is present on residues S593 and S621. K626 is covalently cross-linked (Glycyl lysine isopeptide (Lys-Gly) (interchain with G-Cter in SUMO2)). The tract at residues 642 to 712 is disordered; it reads VTLDWAKPKG…KPQGKKTKFE (71 aa). An N6-acetyllysine modification is found at K648. Gly residues predominate over residues 652–698; that stretch reads EGGFGGRGGGRGGFGGRGGGRGGRGGFGGRGRGGFGGRGGFRGGRGG. R658, R662, R668, R672, R675, R681, R683, R689, and R693 each carry asymmetric dimethylarginine. Residue R696 is modified to Asymmetric dimethylarginine; alternate. Position 696 is an omega-N-methylarginine; alternate (R696). Basic and acidic residues predominate over residues 699 to 712; it reads GGDHKPQGKKTKFE.

Identified in a IGF2BP1-dependent mRNP granule complex containing untranslated mRNAs. Component of the SWAP complex that consists of NPM1, NCL/nucleolin, PARP1 and SWAP70. Component of a complex which is at least composed of HTATSF1/Tat-SF1, the P-TEFb complex components CDK9 and CCNT1, RNA polymerase II, SUPT5H, and NCL/nucleolin. Interacts with AICDA. Interacts with APTX. Interacts with C1QBP. Interacts with ERBB4. Interacts (via C-terminus) with FMR1 isoform 6 (via N-terminus). Interacts with GZF1; this interaction is important for nucleolar localization of GZF1. Interacts with NSUN2. Interacts with NVL. Interacts (via N-terminus domain) with SETX. Interacts (via RRM1 and C-terminal RRM4/Arg/Gly-rich domains) with TERT; the interaction is important for nucleolar localization of TERT. Interacts with WDR46. Interacts with ZFP36. Interacts with LRRC34. Interacts with RRP1B. Interacts with HNRNPU; this interaction occurs during mitosis. Interacts with RIOK1; RIOK1 recruits NCL to the PRMT5 for symmetrically methylation. Interacts with ZBTB7B. Interacts with MDK; this interaction promotes NCL clustering and lateral movements of this complex into lipid rafts leading to MDK internalization. Interacts with HDGF. Interacts with ALKBH2. Interacts with IGFBP5; this interaction is necessary for IGFBP5 localization to the nucleus. Interacts with DDX24 (when ubiquitinated); this interaction may be important during ribosome biogenesis. Some glutamate residues are glycylated by TTLL8. This modification occurs exclusively on glutamate residues and results in a glycine chain on the gamma-carboxyl group. In terms of processing, symmetrically methylated by PRMT5.

It localises to the nucleus. The protein localises to the nucleolus. The protein resides in the cytoplasm. Its function is as follows. Nucleolin is the major nucleolar protein of growing eukaryotic cells. It is found associated with intranucleolar chromatin and pre-ribosomal particles. It induces chromatin decondensation by binding to histone H1. It is thought to play a role in pre-rRNA transcription and ribosome assembly. May play a role in the process of transcriptional elongation. Binds RNA oligonucleotides with 5'-UUAGGG-3' repeats more tightly than the telomeric single-stranded DNA 5'-TTAGGG-3' repeats. This chain is Nucleolin (NCL), found in Pongo abelii (Sumatran orangutan).